A 378-amino-acid chain; its full sequence is Alcohol dehydrogenase 1 (378 aa).

Cys-48 is a binding site for Zn(2+). Position 49–53 (49–53) interacts with NAD(+); the sequence is HTDVL. Zn(2+)-binding residues include His-69, Cys-99, Cys-102, Cys-105, Cys-113, and Cys-177. Residues 202 to 207, Asp-226, Lys-231, 274 to 276, 297 to 299, and 321 to 323 each bind NAD(+); these read GIGTVG, TGV, IGA, and TTF.

Belongs to the zinc-containing alcohol dehydrogenase family. Class-IV subfamily. In terms of assembly, homodimer. The cofactor is Zn(2+). Expressed in flowers and disk florets.

It functions in the pathway isoprenoid biosynthesis. The protein is Alcohol dehydrogenase 1 of Tanacetum cinerariifolium (Dalmatian daisy).